We begin with the raw amino-acid sequence, 438 residues long: DNA primase DnaG (438 aa).

In terms of domain architecture, Toprim spans 169–243 (DSIIVVEGRA…DIDYVARAPY (75 aa)). 3 residues coordinate Mg(2+): Glu175, Asp217, and Asp219.

Belongs to the archaeal DnaG primase family. As to quaternary structure, forms a ternary complex with MCM helicase and DNA. Mg(2+) is required as a cofactor.

The catalysed reaction is ssDNA + n NTP = ssDNA/pppN(pN)n-1 hybrid + (n-1) diphosphate.. Its function is as follows. RNA polymerase that catalyzes the synthesis of short RNA molecules used as primers for DNA polymerase during DNA replication. The protein is DNA primase DnaG of Methanococcus maripaludis (strain C5 / ATCC BAA-1333).